Consider the following 616-residue polypeptide: Telomeric repeat-binding factor 2-interacting protein 1 (616 aa).

Residues 15 to 98 form the BRCT domain; that stretch reads FLDPGGQSMR…QQLDPNDYAI (84 aa). Residues 112-169 form the Myb-like domain; sequence NQGSGRLGYSSEEDAAILKFIEKRQQDAKGNLVWKEMEKRHVTEHSWQSMKDRFLKHL. The segment at 174-518 is disordered; sequence ADKPTKKSPI…CSHIRETPEE (345 aa). Residues 232-245 show a composition bias toward low complexity; that stretch reads PERASSPPEEPQAA. The span at 246–255 shows a compositional bias: polar residues; the sequence is GQPSQASSND. Basic and acidic residues-rich tracts occupy residues 271-288 and 344-358; these read ENPR…EHSS and RSSR…RDIP. 2 stretches are compositionally biased toward polar residues: residues 363-382 and 397-415; these read EQSS…SDSG and NANS…ASTP. The span at 431-444 shows a compositional bias: acidic residues; it reads EDSDVMDDSEECEN. Positions 468 to 480 are enriched in basic and acidic residues; sequence REPESQAEHHEET. Positions 597–613 match the Nuclear localization signal motif; it reads SKFGEEEVTRRKSFLAT.

Belongs to the RAP1 family. In terms of assembly, homodimer. Component of the shelterin complex (telosome). Interacts with terf2; the interaction is direct.

It is found in the nucleus. The protein resides in the chromosome. The protein localises to the telomere. Functionally, acts both as a regulator of telomere function and as a transcription regulator. Involved in the regulation of telomere length and protection as a component of the shelterin complex (telosome). Does not bind DNA directly: recruited to telomeric double-stranded 5'-TTAGGG-3' repeats via its interaction with terf2. Independently of its function in telomeres, also acts as a transcription regulator: recruited to extratelomeric 5'-TTAGGG-3' sites via its association with terf2 or other factors, and regulates gene expression. The sequence is that of Telomeric repeat-binding factor 2-interacting protein 1 (terf2ip) from Danio rerio (Zebrafish).